The following is a 48-amino-acid chain: Light-harvesting polypeptide B-885 beta-2 chain (48 aa).

Topologically, residues 1 to 20 are cytoplasmic; sequence AEDRKSLSGLTEQEAQEFGT. Residues 21 to 43 form a helical membrane-spanning segment; that stretch reads LYTQGVAFVAVIAIVAHALVWAW. A bacteriochlorophyll is bound at residue H37. Topologically, residues 44-48 are periplasmic; the sequence is RPWLQ.

The protein belongs to the antenna complex beta subunit family. The core complex is formed by different alpha and beta chains, binding bacteriochlorophyll molecules, and arranged most probably in tetrameric structures disposed around the reaction center. The non-pigmented gamma chains may constitute additional components.

The protein localises to the cell inner membrane. Its function is as follows. Antenna complexes are light-harvesting systems, which transfer the excitation energy to the reaction centers. The sequence is that of Light-harvesting polypeptide B-885 beta-2 chain from Rhodocyclus tenuis (Rhodospirillum tenue).